A 167-amino-acid chain; its full sequence is NAD(P)H-quinone oxidoreductase subunit I, chloroplastic (167 aa).

4Fe-4S ferredoxin-type domains follow at residues 55 to 84 (GRIH…VDWK) and 95 to 124 (LNYS…MTEE). Positions 64, 67, 70, 74, 104, 107, 110, and 114 each coordinate [4Fe-4S] cluster.

Belongs to the complex I 23 kDa subunit family. In terms of assembly, NDH is composed of at least 16 different subunits, 5 of which are encoded in the nucleus. It depends on [4Fe-4S] cluster as a cofactor.

It is found in the plastid. The protein resides in the chloroplast thylakoid membrane. It carries out the reaction a plastoquinone + NADH + (n+1) H(+)(in) = a plastoquinol + NAD(+) + n H(+)(out). The catalysed reaction is a plastoquinone + NADPH + (n+1) H(+)(in) = a plastoquinol + NADP(+) + n H(+)(out). NDH shuttles electrons from NAD(P)H:plastoquinone, via FMN and iron-sulfur (Fe-S) centers, to quinones in the photosynthetic chain and possibly in a chloroplast respiratory chain. The immediate electron acceptor for the enzyme in this species is believed to be plastoquinone. Couples the redox reaction to proton translocation, and thus conserves the redox energy in a proton gradient. The polypeptide is NAD(P)H-quinone oxidoreductase subunit I, chloroplastic (Solanum tuberosum (Potato)).